Consider the following 214-residue polypeptide: Ribosomal RNA small subunit methyltransferase G (214 aa).

S-adenosyl-L-methionine-binding positions include G81, M86, 132 to 133, and R147; that span reads VE.

This sequence belongs to the methyltransferase superfamily. RNA methyltransferase RsmG family.

The protein resides in the cytoplasm. The catalysed reaction is guanosine(527) in 16S rRNA + S-adenosyl-L-methionine = N(7)-methylguanosine(527) in 16S rRNA + S-adenosyl-L-homocysteine. Its function is as follows. Specifically methylates the N7 position of guanine in position 527 of 16S rRNA. This chain is Ribosomal RNA small subunit methyltransferase G, found in Ectopseudomonas mendocina (strain ymp) (Pseudomonas mendocina).